The primary structure comprises 126 residues: Protein ApaG (126 aa).

The region spanning 2–126 is the ApaG domain; that stretch reads SDPRYQIDVS…FRLAVPGALH (125 aa).

This Pseudomonas putida (strain W619) protein is Protein ApaG.